We begin with the raw amino-acid sequence, 83 residues long: Neurotoxin LmNaTx34.5 (83 aa).

The first 15 residues, 1 to 15 (FILVVIALMVIEVKS), serve as a signal peptide directing secretion. The LCN-type CS-alpha/beta domain occupies 16 to 82 (DGYLMVRAGR…IWTYEKNTCS (67 aa)). Disulfide bonds link C29-C81, C33-C54, C40-C61, and C44-C63.

Belongs to the long (4 C-C) scorpion toxin superfamily. Sodium channel inhibitor family. Beta subfamily. As to expression, expressed by the venom gland.

The protein resides in the secreted. Binds voltage-independently at site-4 of sodium channels (Nav) and shift the voltage of activation toward more negative potentials thereby affecting sodium channel activation and promoting spontaneous and repetitive firing. This Lychas mucronatus (Chinese swimming scorpion) protein is Neurotoxin LmNaTx34.5.